The chain runs to 141 residues: Hemoglobin subunit alpha-D (141 aa).

The region spanning 1–141 is the Globin domain; the sequence is MLTAEDKKLI…VAAVLAEKYR (141 aa). Positions 58 and 87 each coordinate heme b.

Belongs to the globin family. In terms of assembly, heterotetramer of two alpha-D chains and two beta chains. In terms of tissue distribution, red blood cells.

In terms of biological role, involved in oxygen transport from the lung to the various peripheral tissues. This Anas platyrhynchos (Mallard) protein is Hemoglobin subunit alpha-D (HBAD).